Reading from the N-terminus, the 281-residue chain is Very long chain fatty acid elongase 7 (281 aa).

An N-acetylalanine modification is found at alanine 2. Residues 2–27 lie on the Lumenal side of the membrane; the sequence is AFSDLTSRTVRFYDNWIKDADPRVEN. The chain crosses the membrane as a helical span at residues 28 to 48; the sequence is WLLMSSPLPQTIILGLYVYFV. At 49-72 the chain is on the cytoplasmic side; the sequence is TSLGPKLMENRKPFELKKAMITYN. The helical transmembrane segment at 73–93 threads the bilayer; it reads FFIVLFSVYMCYEFVMSGWGT. The Lumenal segment spans residues 94-115; sequence GYSFRCDIVDYSQSPRAMRMVH. An intrachain disulfide couples cysteine 99 to cysteine 231. A helical transmembrane segment spans residues 116 to 136; that stretch reads TCWLYYFSKFIELFDTIFFVL. Positions 124, 137, 139, 142, and 147 each coordinate 3-oxoeicosanoyl-CoA. Over 137-142 the chain is Cytoplasmic; sequence RKKNSQ. Residues 143 to 162 traverse the membrane as a helical segment; the sequence is VTFLHVFHHTIMPWTWWFGV. Residues 147 to 151 carry the HxxHH motif motif; that stretch reads HVFHH. Histidine 150 (nucleophile) is an active-site residue. Over 163 to 176 the chain is Lumenal; it reads KFAAGGLGTFHALL. Residues 177 to 197 traverse the membrane as a helical segment; that stretch reads NTAVHVVMYFYYGLCAMGPAY. 3-oxoeicosanoyl-CoA-binding residues include tyrosine 187, lysine 204, threonine 208, and glutamine 211. Residues 198–206 are Cytoplasmic-facing; that stretch reads QKYLWWKKH. A helical transmembrane segment spans residues 207–227; the sequence is LTSLQLVQFVLVTVHIGQIFF. Over 228 to 236 the chain is Lumenal; it reads MEDCNYQYP. Residues 237 to 257 form a helical membrane-spanning segment; the sequence is VFLYIIMSYGCIFLLLFLHFW. At 258-281 the chain is on the cytoplasmic side; it reads YRAYTKGQRLPKTMENGNCKSKHH. A 3-oxoeicosanoyl-CoA-binding site is contributed by arginine 266. Positions 277–281 match the Di-lysine motif motif; it reads KSKHH.

It belongs to the ELO family. ELOVL7 subfamily. Homodimer. Interacts with TECR.

Its subcellular location is the endoplasmic reticulum membrane. It carries out the reaction a very-long-chain acyl-CoA + malonyl-CoA + H(+) = a very-long-chain 3-oxoacyl-CoA + CO2 + CoA. The enzyme catalyses eicosanoyl-CoA + malonyl-CoA + H(+) = 3-oxodocosanoyl-CoA + CO2 + CoA. The catalysed reaction is (5Z,8Z,11Z,14Z)-eicosatetraenoyl-CoA + malonyl-CoA + H(+) = (7Z,10Z,13Z,16Z)-3-oxodocosatetraenoyl-CoA + CO2 + CoA. It catalyses the reaction (6Z,9Z,12Z)-octadecatrienoyl-CoA + malonyl-CoA + H(+) = (8Z,11Z,14Z)-3-oxoeicosatrienoyl-CoA + CO2 + CoA. It carries out the reaction (9Z,12Z)-octadecadienoyl-CoA + malonyl-CoA + H(+) = (11Z,14Z)-3-oxoicosa-11,14-dienoyl-CoA + CO2 + CoA. The enzyme catalyses (9Z)-octadecenoyl-CoA + malonyl-CoA + H(+) = 3-oxo-(11Z)-eicosenoyl-CoA + CO2 + CoA. The catalysed reaction is octadecanoyl-CoA + malonyl-CoA + H(+) = 3-oxoeicosanoyl-CoA + CO2 + CoA. It catalyses the reaction hexadecanoyl-CoA + malonyl-CoA + H(+) = 3-oxooctadecanoyl-CoA + CO2 + CoA. It carries out the reaction (9Z,12Z,15Z)-octadecatrienoyl-CoA + malonyl-CoA + H(+) = (11Z,14Z,17Z)-3-oxoeicosatrienoyl-CoA + CO2 + CoA. Its pathway is lipid metabolism; fatty acid biosynthesis. In terms of biological role, catalyzes the first and rate-limiting reaction of the four reactions that constitute the long-chain fatty acids elongation cycle. This endoplasmic reticulum-bound enzymatic process allows the addition of 2 carbons to the chain of long- and very long-chain fatty acids (VLCFAs) per cycle. Condensing enzyme with higher activity toward C18 acyl-CoAs, especially C18:3(n-3) acyl-CoAs and C18:3(n-6)-CoAs. Also active toward C20:4-, C18:0-, C18:1-, C18:2- and C16:0-CoAs, and weakly toward C20:0-CoA. Little or no activity toward C22:0-, C24:0-, or C26:0-CoAs. May participate in the production of saturated and polyunsaturated VLCFAs of different chain lengths that are involved in multiple biological processes as precursors of membrane lipids and lipid mediators. The sequence is that of Very long chain fatty acid elongase 7 from Rattus norvegicus (Rat).